The following is a 1214-amino-acid chain: Lysine-specific demethylase 3A (1214 aa).

A phosphoserine mark is found at Ser-150 and Ser-209. The segment covering 194-211 has biased composition (polar residues); it reads TPSSNRQQNTPQAANSPP. Disordered stretches follow at residues 194-215, 271-293, and 310-398; these read TPSSNRQQNTPQAANSPPNIGA, PKGSCIQPKTNTDQESRLESTPQ, and KAEL…KSVL. Ser-330 bears the Phosphoserine mark. Residues 361–370 show a composition bias toward polar residues; sequence LGSQSQNLKE. Residues 371 to 380 show a composition bias toward basic and acidic residues; the sequence is TSVKVDHDSC. Residues 381–391 are compositionally biased toward polar residues; that stretch reads CTRSSNKTQTP. The C6-type zinc-finger motif lies at 546 to 571; it reads CDVCDTTIFNLHWVCPRCGFGVCVDC. An LXXLL motif motif is present at residues 769-773; the sequence is LRNLL. Lys-779 is subject to N6-acetyllysine. Positions 944 to 1167 constitute a JmjC domain; it reads MPSRFDDLMA…HCFWLTQEFR (224 aa). The Fe cation site is built by His-1006, Asp-1008, and His-1135.

The protein belongs to the JHDM2 histone demethylase family. Interacts with VRK1. The cofactor is Fe(2+). Testis specific. Expressed only in male germ cells.

It localises to the cytoplasm. Its subcellular location is the nucleus. The catalysed reaction is N(6),N(6)-dimethyl-L-lysyl(9)-[histone H3] + 2 2-oxoglutarate + 2 O2 = L-lysyl(9)-[histone H3] + 2 formaldehyde + 2 succinate + 2 CO2. In terms of biological role, histone demethylase that specifically demethylates 'Lys-9' of histone H3, thereby playing a central role in histone code. Preferentially demethylates mono- and dimethylated H3 'Lys-9' residue, with a preference for dimethylated residue, while it has weak or no activity on trimethylated H3 'Lys-9'. Demethylation of Lys residue generates formaldehyde and succinate. Involved in hormone-dependent transcriptional activation, by participating in recruitment to androgen-receptor target genes, resulting in H3 'Lys-9' demethylation and transcriptional activation. Involved in spermatogenesis by regulating expression of target genes such as PRM1 and TNP1 which are required for packaging and condensation of sperm chromatin. Directly regulates expression of PPARA and UCP1 and is involved in obesity resistance. The chain is Lysine-specific demethylase 3A (Kdm3a) from Rattus norvegicus (Rat).